The sequence spans 484 residues: BPI fold-containing family B member 1 (484 aa).

An N-terminal signal peptide occupies residues 1 to 21 (MAGPWTFTLLCGLLAATLIQA). N48 is a glycosylation site (N-linked (GlcNAc...) asparagine). C158 and C201 are disulfide-bonded. 2 N-linked (GlcNAc...) asparagine glycosylation sites follow: N264 and N401.

This sequence belongs to the BPI/LBP/Plunc superfamily. Plunc family. Detected in duodenum mucosal crypts of cholera patients, near Paneth cells (at protein level). Detected in trachea, nasal septal epithelium and lung.

The protein localises to the secreted. In terms of biological role, may play a role in innate immunity in mouth, nose and lungs. Binds bacterial lipopolysaccharide (LPS) and modulates the cellular responses to LPS. This is BPI fold-containing family B member 1 (BPIFB1) from Homo sapiens (Human).